We begin with the raw amino-acid sequence, 99 residues long: Small ribosomal subunit protein uS17 (99 aa).

Belongs to the universal ribosomal protein uS17 family. In terms of assembly, part of the 30S ribosomal subunit.

In terms of biological role, one of the primary rRNA binding proteins, it binds specifically to the 5'-end of 16S ribosomal RNA. This is Small ribosomal subunit protein uS17 from Thermosipho africanus (strain TCF52B).